A 469-amino-acid chain; its full sequence is ATP synthase subunit beta (469 aa).

Residue 155–162 (GGAGVGKT) coordinates ATP.

Belongs to the ATPase alpha/beta chains family. As to quaternary structure, F-type ATPases have 2 components, CF(1) - the catalytic core - and CF(0) - the membrane proton channel. CF(1) has five subunits: alpha(3), beta(3), gamma(1), delta(1), epsilon(1). CF(0) has three main subunits: a(1), b(2) and c(9-12). The alpha and beta chains form an alternating ring which encloses part of the gamma chain. CF(1) is attached to CF(0) by a central stalk formed by the gamma and epsilon chains, while a peripheral stalk is formed by the delta and b chains.

It localises to the cell inner membrane. It carries out the reaction ATP + H2O + 4 H(+)(in) = ADP + phosphate + 5 H(+)(out). In terms of biological role, produces ATP from ADP in the presence of a proton gradient across the membrane. The catalytic sites are hosted primarily by the beta subunits. This chain is ATP synthase subunit beta, found in Helicobacter pylori (strain ATCC 700392 / 26695) (Campylobacter pylori).